Here is a 596-residue protein sequence, read N- to C-terminus: UvrABC system protein C (596 aa).

Residues 14–91 (DQPGCYLMKD…IKLHDPKYNV (78 aa)) enclose the GIY-YIG domain. Residues 196–231 (EAVKKELEVKMLAAAENLEFERAKEFRDQIAHIDTV) form the UVR domain.

The protein belongs to the UvrC family. In terms of assembly, interacts with UvrB in an incision complex.

It is found in the cytoplasm. Functionally, the UvrABC repair system catalyzes the recognition and processing of DNA lesions. UvrC both incises the 5' and 3' sides of the lesion. The N-terminal half is responsible for the 3' incision and the C-terminal half is responsible for the 5' incision. The chain is UvrABC system protein C from Lysinibacillus sphaericus (strain C3-41).